We begin with the raw amino-acid sequence, 346 residues long: MLKSRLRMFLNELKLLVLTGGGRPRAEPQPRGGRGGGCGWAPFAGCSTRDGDGDEEEYYGSEPRARGLAGDKEPRAGPLPPPAPPLPPPGALDALSLSSSLDSGLRTPQCRICFQGPEQGELLSPCRCDGSVRCTHQPCLIRWISERGSWSCELCYFKYQVLAISTKNPLQWQAISLTVIEKVQIAAIVLGSLFLVASISWLIWSSLSPSAKWQRQDLLFQICYGMYGFMDVVCIGLIIHEGSSVYRIFKRWQAVNQQWKVLNYDKTKDIGGDAGGGTAGKSGPRNSRTGPTSGATSRPPAAQRMRTLLPQRCGYTILHLLGQLRPPDARSSSHSGREVVMRVTTV.

Disordered regions lie at residues 20–39 (GGGR…GGCG) and 47–92 (STRD…PGAL). A compositionally biased stretch (basic and acidic residues) spans 63–75 (PRARGLAGDKEPR). A compositionally biased stretch (pro residues) spans 77 to 90 (GPLPPPAPPLPPPG). The RING-CH-type zinc-finger motif lies at 102 to 162 (DSGLRTPQCR…ELCYFKYQVL (61 aa)). Zn(2+) is bound by residues cysteine 110, cysteine 113, cysteine 126, cysteine 128, histidine 136, cysteine 139, cysteine 152, and cysteine 155. A run of 2 helical transmembrane segments spans residues 185–205 (IAAI…LIWS) and 219–239 (LFQI…GLII). Disordered stretches follow at residues 273–301 (DAGG…RPPA) and 326–346 (PPDA…VTTV). Over residues 284–296 (PRNSRTGPTSGAT) the composition is skewed to polar residues.

In terms of assembly, homodimer. Ubiquitously expressed.

Its subcellular location is the golgi apparatus membrane. It is found in the lysosome membrane. It catalyses the reaction S-ubiquitinyl-[E2 ubiquitin-conjugating enzyme]-L-cysteine + [acceptor protein]-L-lysine = [E2 ubiquitin-conjugating enzyme]-L-cysteine + N(6)-ubiquitinyl-[acceptor protein]-L-lysine.. Its pathway is protein modification; protein ubiquitination. In terms of biological role, E3 ubiquitin-protein ligase that may mediate ubiquitination of MHC-I, CD4 and ICAM1, and promote their subsequent endocytosis and sorting to lysosomes via multivesicular bodies. E3 ubiquitin ligases accept ubiquitin from an E2 ubiquitin-conjugating enzyme in the form of a thioester and then directly transfer the ubiquitin to targeted substrates. This Homo sapiens (Human) protein is E3 ubiquitin-protein ligase MARCHF9.